The chain runs to 354 residues: S-adenosylmethionine:tRNA ribosyltransferase-isomerase (354 aa).

This sequence belongs to the QueA family. As to quaternary structure, monomer.

It localises to the cytoplasm. It catalyses the reaction 7-aminomethyl-7-carbaguanosine(34) in tRNA + S-adenosyl-L-methionine = epoxyqueuosine(34) in tRNA + adenine + L-methionine + 2 H(+). Its pathway is tRNA modification; tRNA-queuosine biosynthesis. Functionally, transfers and isomerizes the ribose moiety from AdoMet to the 7-aminomethyl group of 7-deazaguanine (preQ1-tRNA) to give epoxyqueuosine (oQ-tRNA). The chain is S-adenosylmethionine:tRNA ribosyltransferase-isomerase from Salmonella dublin (strain CT_02021853).